The sequence spans 437 residues: Proline--tRNA ligase (437 aa).

It belongs to the class-II aminoacyl-tRNA synthetase family. ProS type 2 subfamily. In terms of assembly, homodimer.

It localises to the cytoplasm. The catalysed reaction is tRNA(Pro) + L-proline + ATP = L-prolyl-tRNA(Pro) + AMP + diphosphate. Functionally, catalyzes the attachment of proline to tRNA(Pro) in a two-step reaction: proline is first activated by ATP to form Pro-AMP and then transferred to the acceptor end of tRNA(Pro). The sequence is that of Proline--tRNA ligase from Acidiphilium cryptum (strain JF-5).